The following is a 453-amino-acid chain: Dihydrolipoyllysine-residue succinyltransferase component of 2-oxoglutarate dehydrogenase complex, mitochondrial (453 aa).

The transit peptide at 1 to 67 directs the protein to the mitochondrion; the sequence is MLSRSRCVSR…RFFRTTAVCK (67 aa). Positions 70 to 144 constitute a Lipoyl-binding domain; it reads LVTVKTPAFA…EGGTPLFTLR (75 aa). Ser81 bears the Phosphoserine mark. Lys110 is subject to N6-lipoyllysine. Positions 152–172 are enriched in low complexity; that stretch reads KAKPAEAPAAAAPKAEPTAAA. Residues 152-225 form a disordered region; that stretch reads KAKPAEAPAA…GKGLRSEHRE (74 aa). Position 154 is an N6-acetyllysine (Lys154). Residues 173–196 are compositionally biased toward pro residues; that stretch reads VPPPAAPIPTQMPPVPSPSQPPSG. Residues Lys267, Lys272, Lys273, Lys277, and Lys307 each carry the N6-acetyllysine modification. Catalysis depends on residues His424 and Asp428.

This sequence belongs to the 2-oxoacid dehydrogenase family. As to quaternary structure, the 2-oxoglutarate dehydrogenase complex is composed of OGDH (2-oxoglutarate dehydrogenase; E1), DLST (dihydrolipoamide succinyltransferase; E2), DLD (dihydrolipoamide dehydrogenase; E3) and the assembly factor KGD4. It contains multiple copies of the three enzymatic components (E1, E2 and E3). In the nucleus, the 2-oxoglutarate dehydrogenase complex associates with KAT2A. Interacts with ABHD11; this interaction maintains the functional lipoylation of the 2-oxoglutarate dehydrogenase complex. (R)-lipoate is required as a cofactor.

Its subcellular location is the mitochondrion matrix. It localises to the nucleus. It catalyses the reaction N(6)-[(R)-dihydrolipoyl]-L-lysyl-[protein] + succinyl-CoA = N(6)-[(R)-S(8)-succinyldihydrolipoyl]-L-lysyl-[protein] + CoA. It functions in the pathway amino-acid degradation; L-lysine degradation via saccharopine pathway; glutaryl-CoA from L-lysine: step 6/6. Its pathway is carbohydrate metabolism; tricarboxylic acid cycle. In terms of biological role, dihydrolipoamide succinyltransferase (E2) component of the 2-oxoglutarate dehydrogenase complex. The 2-oxoglutarate dehydrogenase complex catalyzes the overall conversion of 2-oxoglutarate to succinyl-CoA and CO(2). The 2-oxoglutarate dehydrogenase complex is mainly active in the mitochondrion. A fraction of the 2-oxoglutarate dehydrogenase complex also localizes in the nucleus and is required for lysine succinylation of histones: associates with KAT2A on chromatin and provides succinyl-CoA to histone succinyltransferase KAT2A. The sequence is that of Dihydrolipoyllysine-residue succinyltransferase component of 2-oxoglutarate dehydrogenase complex, mitochondrial from Homo sapiens (Human).